We begin with the raw amino-acid sequence, 230 residues long: Ribonuclease 3 (230 aa).

In terms of domain architecture, RNase III spans 1–134 (MKQLEELLST…FLGALLLDKG (134 aa)). Position 47 (Glu47) interacts with Mg(2+). The active site involves Asp51. Mg(2+) contacts are provided by Asp120 and Glu123. The active site involves Glu123. Residues 160-229 (DYKTCLQEFL…AKNALAQLSE (70 aa)) enclose the DRBM domain.

The protein belongs to the ribonuclease III family. As to quaternary structure, homodimer. The cofactor is Mg(2+).

The protein resides in the cytoplasm. The catalysed reaction is Endonucleolytic cleavage to 5'-phosphomonoester.. Functionally, digests double-stranded RNA. Involved in the processing of primary rRNA transcript to yield the immediate precursors to the large and small rRNAs (23S and 16S). Processes some mRNAs, and tRNAs when they are encoded in the rRNA operon. Processes pre-crRNA and tracrRNA of type II CRISPR loci if present in the organism. This chain is Ribonuclease 3, found in Streptococcus pyogenes serotype M2 (strain MGAS10270).